The chain runs to 208 residues: Ubiquitin-conjugating enzyme E2 S (208 aa).

Residues 14–160 form the UBC core domain; sequence QTIRQVMKEL…ARMMTEIHAQ (147 aa). The active-site Glycyl thioester intermediate is the Cys-98. Residues 161–196 form a disordered region; that stretch reads PAKCGAGASDAKDDDGPSTKKHAGVDKKLQDKKKEK. The segment covering 170 to 196 has biased composition (basic and acidic residues); sequence DAKDDDGPSTKKHAGVDKKLQDKKKEK.

Belongs to the ubiquitin-conjugating enzyme family.

The enzyme catalyses S-ubiquitinyl-[E1 ubiquitin-activating enzyme]-L-cysteine + [E2 ubiquitin-conjugating enzyme]-L-cysteine = [E1 ubiquitin-activating enzyme]-L-cysteine + S-ubiquitinyl-[E2 ubiquitin-conjugating enzyme]-L-cysteine.. It functions in the pathway protein modification; protein ubiquitination. Functionally, catalyzes the covalent attachment of ubiquitin to other proteins. Acts as an essential factor of the anaphase promoting complex/cyclosome (APC/C), a cell cycle-regulated ubiquitin ligase that controls progression through mitosis. Acts by specifically elongating polyubiquitin chains initiated by the E2 enzyme vih/UbcH10 on APC/C substrates, enhancing the degradation of APC/C substrates by the proteasome and promoting mitotic exit. In Drosophila grimshawi (Hawaiian fruit fly), this protein is Ubiquitin-conjugating enzyme E2 S.